The following is a 411-amino-acid chain: Isocitrate dehydrogenase [NADP] peroxisomal (411 aa).

NADP(+) contacts are provided by residues 78–80 and Arg-85; that span reads TIT. Residue Thr-80 participates in substrate binding. Residues 97–103, Arg-112, and Arg-135 each bind substrate; that span reads SPNGTLR. Asp-254 provides a ligand contact to Mn(2+). Lys-262 is an NADP(+) binding site. A Mn(2+)-binding site is contributed by Asp-277. NADP(+) is bound by residues 312–317 and Asn-330; that span reads GTVTRH.

Belongs to the isocitrate and isopropylmalate dehydrogenases family. The cofactor is Mg(2+). Mn(2+) serves as cofactor.

The protein localises to the peroxisome. It catalyses the reaction D-threo-isocitrate + NADP(+) = 2-oxoglutarate + CO2 + NADPH. May play a role in N-alkane metabolism, glutamate synthesis, and/or NADPH generation in the peroxisomes. The protein is Isocitrate dehydrogenase [NADP] peroxisomal (IDP2) of Candida tropicalis (Yeast).